The sequence spans 216 residues: Cytidylate kinase (216 aa).

7–15 contributes to the ATP binding site; sequence GPSGTGKST.

This sequence belongs to the cytidylate kinase family. Type 1 subfamily.

Its subcellular location is the cytoplasm. It carries out the reaction CMP + ATP = CDP + ADP. It catalyses the reaction dCMP + ATP = dCDP + ADP. This Chlamydia felis (strain Fe/C-56) (Chlamydophila felis) protein is Cytidylate kinase.